A 403-amino-acid chain; its full sequence is Aminomethyltransferase, mitochondrial (403 aa).

Residues 1–28 (MQRAMTVVPHLGLRLQALPLALGRPLSR) constitute a mitochondrion transit peptide. Residues Glu232, Arg261, and Tyr399 each coordinate substrate.

This sequence belongs to the GcvT family. As to quaternary structure, the glycine cleavage system is composed of four proteins: P, T, L and H.

Its subcellular location is the mitochondrion. The catalysed reaction is N(6)-[(R)-S(8)-aminomethyldihydrolipoyl]-L-lysyl-[protein] + (6S)-5,6,7,8-tetrahydrofolate = N(6)-[(R)-dihydrolipoyl]-L-lysyl-[protein] + (6R)-5,10-methylene-5,6,7,8-tetrahydrofolate + NH4(+). Functionally, the glycine cleavage system catalyzes the degradation of glycine. The polypeptide is Aminomethyltransferase, mitochondrial (Canis lupus familiaris (Dog)).